The chain runs to 347 residues: Autoinducer 2 import system permease protein LsrC (347 aa).

9 helical membrane-spanning segments follow: residues 14–34 (LLAI…YLSV), 39–59 (MVFS…MVML), 72–92 (GMCA…PVAC), 93–113 (LATL…VAWL), 115–135 (IPAI…MLLW), 155–175 (VFLG…LMAW), 213–233 (LNGG…GFIP), 249–269 (VLGG…ILGA), and 284–304 (IPAW…LVFD).

Belongs to the binding-protein-dependent transport system permease family. AraH/RbsC subfamily. The complex is composed of two ATP-binding proteins (LsrA), two transmembrane proteins (LsrC and LsrD) and a solute-binding protein (LsrB).

Its subcellular location is the cell inner membrane. In terms of biological role, part of the ABC transporter complex LsrABCD involved in autoinducer 2 (AI-2) import. Probably responsible for the translocation of the substrate across the membrane. The sequence is that of Autoinducer 2 import system permease protein LsrC (lsrC) from Salmonella choleraesuis (strain SC-B67).